Reading from the N-terminus, the 255-residue chain is Methanethiol S-methyltransferase (255 aa).

Transmembrane regions (helical) follow at residues Phe-16–Val-36, Leu-56–Val-76, Tyr-99–Ile-119, Ile-131–Ile-151, and Val-191–Ala-211.

Belongs to the nurim family.

Its subcellular location is the membrane. It catalyses the reaction methanethiol + S-adenosyl-L-methionine = dimethyl sulfide + S-adenosyl-L-homocysteine + H(+). Catalyzes the methylation of methanethiol (MeSH) to yield dimethylsulphide (DMS). This chain is Methanethiol S-methyltransferase, found in Crocosphaera subtropica (strain ATCC 51142 / BH68) (Cyanothece sp. (strain ATCC 51142)).